The chain runs to 225 residues: Insulin-induced gene 2 protein (225 aa).

The Cytoplasmic portion of the chain corresponds to 1 to 28 (MAEGETKSPGPKKCGPYISSVTSQSVNL). Residues 29–51 (MIRGVVLFFIGVFLALVLNLLQI) form a helical membrane-spanning segment. The Lumenal segment spans residues 52–70 (QRNVTLFPPDVIASIFSSA). The chain crosses the membrane as a helical span at residues 71 to 88 (WWVPPCCGTASAVIGLLY). At 89 to 103 (PCIDRHLGEPHKFKR) the chain is on the cytoplasmic side. A helical transmembrane segment spans residues 104–126 (EWSSVMRCVAVFVGINHASAKVD). Residues 127–129 (FDN) are Lumenal-facing. Residues 130–148 (NIQLSLTLAALSIGLWWTF) traverse the membrane as a helical segment. Residues 149–153 (DRSRS) are Cytoplasmic-facing. Position 151 is a phosphoserine (Ser-151). The helical transmembrane segment at 154 to 175 (GFGLGVGIAFLATVVTQLLVYN) threads the bilayer. Residues 176 to 189 (GVYQYTSPDFLYVR) are Lumenal-facing. The helical transmembrane segment at 190-207 (SWLPCIFFAGGITMGNIG) threads the bilayer. Residues 208-225 (RQLAMYECKVIAEKSHQE) are Cytoplasmic-facing. Cys-215 is subject to Cysteine sulfenic acid (-SOH); alternate. A Glycyl cysteine thioester (Cys-Gly) (interchain with G-Cter in ubiquitin); alternate cross-link involves residue Cys-215. Residues 219–225 (AEKSHQE) carry the KxHxx motif.

Belongs to the INSIG family. As to quaternary structure, interacts with SCAP; interaction is direct and only takes place in the presence of sterols; it prevents interaction between SCAP and the coat protein complex II (COPII). Associates with the SCAP-SREBP complex (composed of SCAP and SREBF1/SREBP1 or SREBF2/SREBP2); association is mediated via its interaction with SCAP and only takes place in the presence of sterols. Interacts with RNF139. Interacts with RNF145. In terms of processing, phosphorylation at Ser-151 by PCK1 reduces binding to oxysterol, disrupting the interaction between INSIG2 and SCAP, thereby promoting nuclear translocation of SREBP proteins (SREBF1/SREBP1 or SREBF2/SREBP2) and subsequent transcription of downstream lipogenesis-related genes. Post-translationally, polyubiquitinated by AMFR/gp78 at Cys-215 in some tissues such as adipose tissues, undifferentiated myoblasts and liver, leading to its degradation. In differentiated myotubes, Cys-215 oxidation prevents ubiquitination at the same site, resulting in protein stabilization. Oxidized at Cys-215 in differentiated myotubes, preventing ubiquitination at the same site, and resulting in protein stabilization.

It is found in the endoplasmic reticulum membrane. Oxysterol-binding protein that mediates feedback control of cholesterol synthesis by controlling both endoplasmic reticulum to Golgi transport of SCAP and degradation of HMGCR. Acts as a negative regulator of cholesterol biosynthesis by mediating the retention of the SCAP-SREBP complex in the endoplasmic reticulum, thereby blocking the processing of sterol regulatory element-binding proteins (SREBPs) SREBF1/SREBP1 and SREBF2/SREBP2. Binds oxysterol, including 22-hydroxycholesterol, 24-hydroxycholesterol, 25-hydroxycholesterol and 27-hydroxycholesterol, regulating interaction with SCAP and retention of the SCAP-SREBP complex in the endoplasmic reticulum. In presence of oxysterol, interacts with SCAP, retaining the SCAP-SREBP complex in the endoplasmic reticulum, thereby preventing SCAP from escorting SREBF1/SREBP1 and SREBF2/SREBP2 to the Golgi. Sterol deprivation or phosphorylation by PCK1 reduce oxysterol-binding, disrupting the interaction between INSIG2 and SCAP, thereby promoting Golgi transport of the SCAP-SREBP complex, followed by processing and nuclear translocation of SREBF1/SREBP1 and SREBF2/SREBP2. Also regulates cholesterol synthesis by regulating degradation of HMGCR: initiates the sterol-mediated ubiquitin-mediated endoplasmic reticulum-associated degradation (ERAD) of HMGCR via recruitment of the reductase to the ubiquitin ligase RNF139. This chain is Insulin-induced gene 2 protein, found in Pongo abelii (Sumatran orangutan).